The sequence spans 403 residues: Sulfate adenylyltransferase (403 aa).

Belongs to the sulfate adenylyltransferase family.

The enzyme catalyses sulfate + ATP + H(+) = adenosine 5'-phosphosulfate + diphosphate. It participates in sulfur metabolism; hydrogen sulfide biosynthesis; sulfite from sulfate: step 1/3. The polypeptide is Sulfate adenylyltransferase (Pelodictyon phaeoclathratiforme (strain DSM 5477 / BU-1)).